A 1636-amino-acid chain; its full sequence is Tyrosine-protein phosphatase non-receptor type 23 (1636 aa).

One can recognise a BRO1 domain in the interval 8–394 (PMIWLDLKEA…AKIEDKNEVL (387 aa)). TPR repeat units follow at residues 250-283 (AVAH…LNEA) and 374-407 (EEKA…DPET). Residues 550–623 (KAVLQNLKRI…VYLEQNLAAQ (74 aa)) are a coiled coil. The segment covering 701 to 714 (EAARQQLLDRELKK) has biased composition (basic and acidic residues). Disordered regions lie at residues 701–812 (EAAR…GPHA) and 888–1151 (QAPI…AAEG). A Phosphoserine modification is found at S733. Positions 770 to 1130 (HFPPSPFPSS…SSSPESQHGG (361 aa)) are his. Composition is skewed to pro residues over residues 898–922 (RPNP…PTPY) and 950–962 (RIGP…PQPH). At R950 the chain carries Omega-N-methylarginine. 6 repeat units span residues 953–954 (PQ), 955–956 (PQ), 957–958 (PH), 959–960 (PQ), 961–962 (PH), and 963–964 (PS). Residues 953–964 (PQPQPHPQPHPS) are 6 X 2 AA approximate tandem repeats of P-Q. 3 stretches are compositionally biased toward pro residues: residues 983 to 1002 (LFPP…PYAP), 1036 to 1050 (FPSP…PPLA), and 1083 to 1109 (HLVP…PPPC). A compositionally biased stretch (polar residues) spans 1120 to 1131 (LSSSPESQHGGT). 2 positions are modified to phosphoserine: S1122 and S1123. T1131 is subject to Phosphothreonine. A Tyrosine-protein phosphatase domain is found at 1192–1452 (DTVWRELQDA…RFCYEAVVRH (261 aa)). Residue C1392 is the Phosphocysteine intermediate of the active site. The interval 1513–1636 (LESPVASLPG…LDPLWTLNKT (124 aa)) is disordered. Pro residues-rich tracts occupy residues 1523–1533 (PAEPPGLPPAS) and 1542–1556 (SSSP…PEAP). Over residues 1567–1587 (APSSGPPSSSLELLASLTPEA) the composition is skewed to low complexity. Residue R1615 is modified to Omega-N-methylarginine.

This sequence belongs to the protein-tyrosine phosphatase family. Non-receptor class subfamily. Interacts with GRAP2 and GRB2. Interacts with UBAP1. Interacts with CHMP4B.

The protein resides in the nucleus. The protein localises to the cytoplasm. It localises to the cytoplasmic vesicle. Its subcellular location is the endosome. It is found in the cytoskeleton. The protein resides in the cilium basal body. The protein localises to the early endosome. The enzyme catalyses O-phospho-L-tyrosyl-[protein] + H2O = L-tyrosyl-[protein] + phosphate. Plays a role in sorting of endocytic ubiquitinated cargos into multivesicular bodies (MVBs) via its interaction with the ESCRT-I complex (endosomal sorting complex required for transport I), and possibly also other ESCRT complexes. May act as a negative regulator of Ras-mediated mitogenic activity. Plays a role in ciliogenesis. The chain is Tyrosine-protein phosphatase non-receptor type 23 (PTPN23) from Homo sapiens (Human).